The sequence spans 158 residues: Transcriptional regulator MraZ (158 aa).

2 consecutive SpoVT-AbrB domains span residues 7–57 (THQN…PTAA) and 86–129 (AYPV…EPAA). The segment at 133–158 (RRAEARTRSRQLALPAQGRRQGGADA) is disordered.

Belongs to the MraZ family. Forms oligomers.

The protein localises to the cytoplasm. The protein resides in the nucleoid. The polypeptide is Transcriptional regulator MraZ (Gluconacetobacter diazotrophicus (strain ATCC 49037 / DSM 5601 / CCUG 37298 / CIP 103539 / LMG 7603 / PAl5)).